Consider the following 334-residue polypeptide: Probable tRNA pseudouridine synthase B (334 aa).

The Nucleophile role is filled by Asp-82. A PUA domain is found at 250-325 (LPKIWIKDSA…IAVDVEKVFM (76 aa)).

Belongs to the pseudouridine synthase TruB family. Type 2 subfamily.

The catalysed reaction is uridine(55) in tRNA = pseudouridine(55) in tRNA. In terms of biological role, could be responsible for synthesis of pseudouridine from uracil-55 in the psi GC loop of transfer RNAs. This Pyrococcus horikoshii (strain ATCC 700860 / DSM 12428 / JCM 9974 / NBRC 100139 / OT-3) protein is Probable tRNA pseudouridine synthase B.